The sequence spans 194 residues: ATP-dependent Clp protease proteolytic subunit (194 aa).

The Nucleophile role is filled by S98. The active site involves H123.

The protein belongs to the peptidase S14 family. Fourteen ClpP subunits assemble into 2 heptameric rings which stack back to back to give a disk-like structure with a central cavity, resembling the structure of eukaryotic proteasomes.

The protein resides in the cytoplasm. It catalyses the reaction Hydrolysis of proteins to small peptides in the presence of ATP and magnesium. alpha-casein is the usual test substrate. In the absence of ATP, only oligopeptides shorter than five residues are hydrolyzed (such as succinyl-Leu-Tyr-|-NHMec, and Leu-Tyr-Leu-|-Tyr-Trp, in which cleavage of the -Tyr-|-Leu- and -Tyr-|-Trp bonds also occurs).. In terms of biological role, cleaves peptides in various proteins in a process that requires ATP hydrolysis. Has a chymotrypsin-like activity. Plays a major role in the degradation of misfolded proteins. The sequence is that of ATP-dependent Clp protease proteolytic subunit from Aliarcobacter butzleri (strain RM4018) (Arcobacter butzleri).